Consider the following 513-residue polypeptide: Sterol 14-alpha demethylase (513 aa).

A helical transmembrane segment spans residues 10–30 (FTLVSAYAAAGLLAIIVLNLL). N37 and N406 each carry an N-linked (GlcNAc...) asparagine glycan. A heme-binding site is contributed by C453.

The protein belongs to the cytochrome P450 family. Heme is required as a cofactor.

It is found in the endoplasmic reticulum membrane. It catalyses the reaction a 14alpha-methyl steroid + 3 reduced [NADPH--hemoprotein reductase] + 3 O2 = a Delta(14) steroid + formate + 3 oxidized [NADPH--hemoprotein reductase] + 4 H2O + 4 H(+). It carries out the reaction a 14alpha-methyl steroid + reduced [NADPH--hemoprotein reductase] + O2 = a 14alpha-hydroxymethyl steroid + oxidized [NADPH--hemoprotein reductase] + H2O + H(+). The catalysed reaction is a 14alpha-hydroxymethyl steroid + reduced [NADPH--hemoprotein reductase] + O2 = a 14alpha-formyl steroid + oxidized [NADPH--hemoprotein reductase] + 2 H2O + H(+). The enzyme catalyses a 14alpha-formyl steroid + reduced [NADPH--hemoprotein reductase] + O2 = a Delta(14) steroid + formate + oxidized [NADPH--hemoprotein reductase] + H2O + 2 H(+). It catalyses the reaction lanosterol + 3 reduced [NADPH--hemoprotein reductase] + 3 O2 = 4,4-dimethyl-5alpha-cholesta-8,14,24-trien-3beta-ol + formate + 3 oxidized [NADPH--hemoprotein reductase] + 4 H2O + 4 H(+). It carries out the reaction lanosterol + reduced [NADPH--hemoprotein reductase] + O2 = 32-hydroxylanosterol + oxidized [NADPH--hemoprotein reductase] + H2O + H(+). The catalysed reaction is 32-hydroxylanosterol + reduced [NADPH--hemoprotein reductase] + O2 = 32-oxolanosterol + oxidized [NADPH--hemoprotein reductase] + 2 H2O + H(+). The enzyme catalyses 32-oxolanosterol + reduced [NADPH--hemoprotein reductase] + O2 = 4,4-dimethyl-5alpha-cholesta-8,14,24-trien-3beta-ol + formate + oxidized [NADPH--hemoprotein reductase] + H2O + 2 H(+). It catalyses the reaction eburicol + 3 reduced [NADPH--hemoprotein reductase] + 3 O2 = 14-demethyleburicol + formate + 3 oxidized [NADPH--hemoprotein reductase] + 4 H2O + 4 H(+). It carries out the reaction eburicol + reduced [NADPH--hemoprotein reductase] + O2 = 32-hydroxyeburicol + oxidized [NADPH--hemoprotein reductase] + H2O + H(+). The catalysed reaction is 32-hydroxyeburicol + reduced [NADPH--hemoprotein reductase] + O2 = 32-oxoeburicol + oxidized [NADPH--hemoprotein reductase] + 2 H2O + H(+). The enzyme catalyses 32-oxoeburicol + reduced [NADPH--hemoprotein reductase] + O2 = 14-demethyleburicol + formate + oxidized [NADPH--hemoprotein reductase] + H2O + 2 H(+). It functions in the pathway steroid biosynthesis; sterol biosynthesis. Functionally, sterol 14alpha-demethylase, encoded by cyp51A, cyp51B and cyp51C, that plays a critical role in the third module of ergosterol biosynthesis pathway, being ergosterol the major sterol component in fungal membranes that participates in a variety of functions. The third module or late pathway involves the ergosterol synthesis itself through consecutive reactions that mainly occur in the endoplasmic reticulum (ER) membrane. In filamentous fungi, during the initial step of this module, lanosterol (lanosta-8,24-dien-3beta-ol) can be metabolized to eburicol. Sterol 14alpha-demethylase catalyzes the three-step oxidative removal of the 14alpha-methyl group (C-32) of both these sterols in the form of formate, and converts eburicol and lanosterol to 14-demethyleburicol (4,4,24-trimethylergosta-8,14,24(28)-trienol) and 4,4-dimethyl-5alpha-cholesta-8,14,24-trien-3beta-ol, respectively, which are further metabolized by other enzymes in the pathway to ergosterol. Can also use substrates not intrinsic to fungi, such as 24,25-dihydrolanosterol (DHL), producing 4,4'-dimethyl-8,14-cholestadien-3-beta-ol, but at lower rates than the endogenous substrates. As a target of azole drugs, plays a crucial role in azole susceptibility. In Aspergillus flavus (strain ATCC 200026 / FGSC A1120 / IAM 13836 / NRRL 3357 / JCM 12722 / SRRC 167), this protein is Sterol 14-alpha demethylase.